The following is a 201-amino-acid chain: ATP-dependent Clp protease proteolytic subunit (201 aa).

Catalysis depends on Ser105, which acts as the Nucleophile. The active site involves His130.

This sequence belongs to the peptidase S14 family. In terms of assembly, fourteen ClpP subunits assemble into 2 heptameric rings which stack back to back to give a disk-like structure with a central cavity, resembling the structure of eukaryotic proteasomes.

It localises to the cytoplasm. It catalyses the reaction Hydrolysis of proteins to small peptides in the presence of ATP and magnesium. alpha-casein is the usual test substrate. In the absence of ATP, only oligopeptides shorter than five residues are hydrolyzed (such as succinyl-Leu-Tyr-|-NHMec, and Leu-Tyr-Leu-|-Tyr-Trp, in which cleavage of the -Tyr-|-Leu- and -Tyr-|-Trp bonds also occurs).. Cleaves peptides in various proteins in a process that requires ATP hydrolysis. Has a chymotrypsin-like activity. Plays a major role in the degradation of misfolded proteins. In Aquifex aeolicus (strain VF5), this protein is ATP-dependent Clp protease proteolytic subunit.